A 205-amino-acid chain; its full sequence is Cytochrome c oxidase subunit 3 (205 aa).

Helical transmembrane passes span 29–49 (TIVF…MYFV), 73–93 (LAIT…VFAA), 104–124 (WFLI…YEYF), 144–164 (ITTG…VVVL), and 184–204 (SYYW…IYFI).

This sequence belongs to the cytochrome c oxidase subunit 3 family. Associates with subunits I, II and IV to form cytochrome c oxidase.

Its subcellular location is the cell membrane. It catalyses the reaction 4 Fe(II)-[cytochrome c] + O2 + 8 H(+)(in) = 4 Fe(III)-[cytochrome c] + 2 H2O + 4 H(+)(out). In Corynebacterium efficiens (strain DSM 44549 / YS-314 / AJ 12310 / JCM 11189 / NBRC 100395), this protein is Cytochrome c oxidase subunit 3 (ctaE).